A 400-amino-acid chain; its full sequence is Elongation factor Tu (400 aa).

One can recognise a tr-type G domain in the interval 10 to 209 (KPHINIGTIG…AVDDYIPTPE (200 aa)). Residues 19–26 (GHVDHGKT) are G1. 19–26 (GHVDHGKT) provides a ligand contact to GTP. Thr26 is a binding site for Mg(2+). Residues 60–64 (GITIS) form a G2 region. A G3 region spans residues 81–84 (DCPG). GTP-binding positions include 81–85 (DCPGH) and 136–139 (NKVD). Positions 136-139 (NKVD) are G4. Residues 174-176 (SAK) are G5.

It belongs to the TRAFAC class translation factor GTPase superfamily. Classic translation factor GTPase family. EF-Tu/EF-1A subfamily. As to quaternary structure, monomer.

The protein localises to the cytoplasm. The enzyme catalyses GTP + H2O = GDP + phosphate + H(+). In terms of biological role, GTP hydrolase that promotes the GTP-dependent binding of aminoacyl-tRNA to the A-site of ribosomes during protein biosynthesis. This chain is Elongation factor Tu, found in Herpetosiphon aurantiacus (Herpetosiphon giganteus).